A 1257-amino-acid polypeptide reads, in one-letter code: Liprin-alpha-2 (1257 aa).

The interval 1–29 is disordered; sequence MMCEVMPTINEDTPMSQRGSQSSGSDSDS. Residues 16 to 26 are compositionally biased toward low complexity; sequence SQRGSQSSGSD. 2 coiled-coil regions span residues 29-154 and 185-235; these read SHFE…SLRM and KALD…SSEG. Ser236 carries the post-translational modification Phosphoserine. Phosphothreonine is present on Thr237. Ser239 bears the Phosphoserine mark. 2 coiled-coil regions span residues 264 to 541 and 643 to 695; these read TDDT…SLIE and HSDA…GLNL. Residues 439–463 form a disordered region; that stretch reads GQLEEKNQELQRARQREKMNEEHNK. Phosphoserine occurs at positions 687 and 689. Residues 709 to 725 show a composition bias toward low complexity; the sequence is TASSLASSSPPSGHSTP. 2 disordered regions span residues 709–738 and 759–834; these read TASS…EMDR and EEDG…KSSI. Residues 787-802 show a composition bias toward polar residues; it reads TLPSSYHNDARSSLSA. Phosphoserine is present on residues Ser817 and Ser820. SAM domains are found at residues 898–964, 1020–1084, and 1108–1177; these read WDGP…MVSL, NHEW…LKRL, and WSND…LLAL. Residues 1081 to 1107 adopt a coiled-coil conformation; that stretch reads LKRLNYDRKELERRREASQHEIKDVLV.

Belongs to the liprin family. Liprin-alpha subfamily. Forms homodimers and heterodimers with liprins-alpha and liprins-beta. Interacts with the second PTPase domain of PTPRD, PTPRF and PTPRS. Interacts with KIF1A; the interaction decreases in presence of calcium.

The protein resides in the cytoplasm. It localises to the cell surface. The protein localises to the cell projection. Its subcellular location is the dendritic spine. Alters PTPRF cellular localization and induces PTPRF clustering. May regulate the disassembly of focal adhesions. May localize receptor-like tyrosine phosphatases type 2A at specific sites on the plasma membrane, possibly regulating their interaction with the extracellular environment and their association with substrates. In neuronal cells, is a scaffolding protein in the dendritic spines which acts as immobile postsynaptic post able to recruit KIF1A-driven dense core vesicles to dendritic spines. This chain is Liprin-alpha-2 (Ppfia2), found in Mus musculus (Mouse).